A 220-amino-acid chain; its full sequence is Deoxyribose-phosphate aldolase (220 aa).

The Proton donor/acceptor role is filled by Asp-92. The Schiff-base intermediate with acetaldehyde role is filled by Lys-155. Residue Lys-184 is the Proton donor/acceptor of the active site.

Belongs to the DeoC/FbaB aldolase family. DeoC type 1 subfamily.

The protein localises to the cytoplasm. The enzyme catalyses 2-deoxy-D-ribose 5-phosphate = D-glyceraldehyde 3-phosphate + acetaldehyde. It functions in the pathway carbohydrate degradation; 2-deoxy-D-ribose 1-phosphate degradation; D-glyceraldehyde 3-phosphate and acetaldehyde from 2-deoxy-alpha-D-ribose 1-phosphate: step 2/2. Catalyzes a reversible aldol reaction between acetaldehyde and D-glyceraldehyde 3-phosphate to generate 2-deoxy-D-ribose 5-phosphate. In Natranaerobius thermophilus (strain ATCC BAA-1301 / DSM 18059 / JW/NM-WN-LF), this protein is Deoxyribose-phosphate aldolase.